The chain runs to 298 residues: tRNA-uridine aminocarboxypropyltransferase 2 (298 aa).

Methionine 1 carries the post-translational modification N-acetylmethionine. The disordered stretch occupies residues 1-52 (MESQKEARILQEPVARPPGASRSQTPNAKERQEGGPVPAAAALGAEADDDSA). A Phosphoserine modification is found at serine 132. A DXTW motif is present at residues 178-181 (DGTW).

Belongs to the TDD superfamily. DTWD2 family.

It localises to the nucleus. The protein resides in the cytoplasm. The enzyme catalyses a uridine in tRNA + S-adenosyl-L-methionine = a 3-[(3S)-3-amino-3-carboxypropyl]uridine in tRNA + S-methyl-5'-thioadenosine + H(+). In terms of biological role, catalyzes the formation of 3-(3-amino-3-carboxypropyl)uridine (acp3U) at position 20a in the D-loop of several cytoplasmic tRNAs (acp3U(20a)). Also has a weak activity to form acp3U at position 20 in the D-loop of tRNAs (acp3U(20)). Involved in glycoRNA biosynthesis by mediating formation of acp3U, which acts as an attachment site for N-glycans on tRNAs. GlycoRNAs consist of RNAs modified with secretory N-glycans that are presented on the cell surface. The chain is tRNA-uridine aminocarboxypropyltransferase 2 from Macaca fascicularis (Crab-eating macaque).